The following is a 129-amino-acid chain: Natriuretic peptides B (129 aa).

Positions 1-26 are cleaved as a signal peptide; it reads MDPQKALSRTLLLLLFLHLSLLGCRS. A disulfide bond links C107 and C123.

The protein belongs to the natriuretic peptide family. In terms of processing, the precursor molecule is proteolytically cleaved, possibly by FURIN or CORIN, to produce the active peptide. May undergo further proteolytic cleavage by various proteases such as DPP4, MME and possibly FAP, to give rise to a variety of shorter peptides. May be cleaved at Pro-99 by the prolyl endopeptidase FAP (seprase) activity (in vitro). May be degraded by IDE. During IDE degradation, the resulting products initially increase the activation of NPR1 and can also stimulate NPR2 to produce cGMP before the fragments are completely degraded and inactivated by IDE (in vitro).

Its subcellular location is the secreted. Its function is as follows. Cardiac hormone that plays a key role in mediating cardio-renal homeostasis. May also function as a paracrine antifibrotic factor in the heart. Acts by specifically binding and stimulating NPR1 to produce cGMP, which in turn activates effector proteins that drive various biological responses. Involved in regulating the extracellular fluid volume and maintaining the fluid-electrolyte balance through natriuresis, diuresis, vasorelaxation, and inhibition of renin and aldosterone secretion. Binds the clearance receptor NPR3. The sequence is that of Natriuretic peptides B (NPPB) from Ovis aries (Sheep).